A 118-amino-acid polypeptide reads, in one-letter code: Basic phospholipase A2 CM-III (118 aa).

7 disulfides stabilise this stretch: Cys11-Cys70, Cys26-Cys117, Cys28-Cys44, Cys43-Cys98, Cys50-Cys91, Cys59-Cys84, and Cys77-Cys89. Tyr27, Gly29, and Gly31 together coordinate Ca(2+). His47 is an active-site residue. Asp48 lines the Ca(2+) pocket. Residues 52 to 69 (EKAGKMGCWPYFTLYKYK) carry the Coagulation factor Xa binding motif motif. Asp92 is a catalytic residue.

It belongs to the phospholipase A2 family. Group I subfamily. D49 sub-subfamily. Ca(2+) serves as cofactor. Expressed by the venom gland.

Its subcellular location is the secreted. It carries out the reaction a 1,2-diacyl-sn-glycero-3-phosphocholine + H2O = a 1-acyl-sn-glycero-3-phosphocholine + a fatty acid + H(+). Snake venom phospholipase A2 (PLA2) that shows several activities. It shows strong anticoagulant activity, probably by binding to coagulation factor Xa (F10) and inhibiting the formation of the prothrombinase complex, shows direct hemolytic action, causes neuromuscular blockade with a gradual contracture and a decreased sensitivity to ACh and KCl, abolishes twitches evoked by indirect stimulation earlier than those by direct stimulation (in the mouse phrenic nerve-diaphragm preparation), and causes myonecrosis when injected intramuscularly. PLA2 catalyzes the calcium-dependent hydrolysis of the 2-acyl groups in 3-sn-phosphoglycerides. This Naja mossambica (Mozambique spitting cobra) protein is Basic phospholipase A2 CM-III.